We begin with the raw amino-acid sequence, 276 residues long: MLLRFTKMHGLGNDFMVLDLVSQHAHIQPKHAKQWGDRHTGIGFDQLLIVEAPNNPEVDFRYRIFNADGSEVEQCGNGARCFARFVLDKRLTAKKRIRVETKSGIIVLDVQNDGQVSVDMGPPRFIPAEIPFVADAQALSYPLEVDGQLHSIAAVSMGNPHAVLRVDDVRTAPVHELGPKIENHPRFPQRVNAGFIQVIDRHRANLRVWERGAGETQACGTGACAAAVAAISQGWMDSPVSLDLPGGRLHIEWAGPGKPVLMTGPAVRVYEGQVRL.

Residues asparagine 13, glutamine 46, and asparagine 66 each contribute to the substrate site. Cysteine 75 functions as the Proton donor in the catalytic mechanism. Residues 76–77, asparagine 159, asparagine 192, and 210–211 each bind substrate; these read GN and ER. Cysteine 219 serves as the catalytic Proton acceptor. Residue 220–221 coordinates substrate; the sequence is GT.

Belongs to the diaminopimelate epimerase family. Homodimer.

It localises to the cytoplasm. The catalysed reaction is (2S,6S)-2,6-diaminopimelate = meso-2,6-diaminopimelate. It participates in amino-acid biosynthesis; L-lysine biosynthesis via DAP pathway; DL-2,6-diaminopimelate from LL-2,6-diaminopimelate: step 1/1. Functionally, catalyzes the stereoinversion of LL-2,6-diaminopimelate (L,L-DAP) to meso-diaminopimelate (meso-DAP), a precursor of L-lysine and an essential component of the bacterial peptidoglycan. This Pseudomonas putida (strain GB-1) protein is Diaminopimelate epimerase.